Here is a 154-residue protein sequence, read N- to C-terminus: 6,7-dimethyl-8-ribityllumazine synthase (154 aa).

5-amino-6-(D-ribitylamino)uracil is bound by residues F23, 57 to 59 (AYE), and 81 to 83 (AVI). 86–87 (GT) lines the (2S)-2-hydroxy-3-oxobutyl phosphate pocket. H89 (proton donor) is an active-site residue. A 5-amino-6-(D-ribitylamino)uracil-binding site is contributed by F114. Residue R128 participates in (2S)-2-hydroxy-3-oxobutyl phosphate binding.

This sequence belongs to the DMRL synthase family. As to quaternary structure, forms an icosahedral capsid composed of 60 subunits, arranged as a dodecamer of pentamers.

The catalysed reaction is (2S)-2-hydroxy-3-oxobutyl phosphate + 5-amino-6-(D-ribitylamino)uracil = 6,7-dimethyl-8-(1-D-ribityl)lumazine + phosphate + 2 H2O + H(+). It functions in the pathway cofactor biosynthesis; riboflavin biosynthesis; riboflavin from 2-hydroxy-3-oxobutyl phosphate and 5-amino-6-(D-ribitylamino)uracil: step 1/2. Catalyzes the formation of 6,7-dimethyl-8-ribityllumazine by condensation of 5-amino-6-(D-ribitylamino)uracil with 3,4-dihydroxy-2-butanone 4-phosphate. This is the penultimate step in the biosynthesis of riboflavin. The sequence is that of 6,7-dimethyl-8-ribityllumazine synthase from Acidithiobacillus ferrooxidans (strain ATCC 23270 / DSM 14882 / CIP 104768 / NCIMB 8455) (Ferrobacillus ferrooxidans (strain ATCC 23270)).